Here is a 410-residue protein sequence, read N- to C-terminus: Protein BTN2 (410 aa).

Disordered stretches follow at residues 223 to 264 (INEP…TKED) and 276 to 410 (MQEE…IEEI). Composition is skewed to basic and acidic residues over residues 233-264 (SKID…TKED) and 276-311 (MQEE…KESL). A coiled-coil region spans residues 243-330 (NMSESLKEEE…QQKKLQNSKS (88 aa)). Residues 334–362 (SEIEASNKNNNSNSGSAESDNESINSDSD) are compositionally biased toward low complexity. Polar residues predominate over residues 364–373 (TLDFSVSGNT).

Interacts with RHB1, IST2, TDA3 and YIF1.

The protein localises to the cytoplasm. Its subcellular location is the late endosome. V-SNARE binding protein that facilitates specific protein retrieval from a late endosome to the Golgi. Modulates the rate of arginine uptake. Involved in pH homeostasis. Required for the correct localization of IST2. May be involved in ion homeostasis together with IST2. The chain is Protein BTN2 (BTN2) from Saccharomyces cerevisiae (strain ATCC 204508 / S288c) (Baker's yeast).